A 377-amino-acid chain; its full sequence is MSDTPTLALAKDLLSRQSITPEDAGCQELMIKRLEALGFTIEIMVFEDTTNFWARRGNEAPLFTFAGHTDVVPTGDLTHWNTNPFEPTIIDGMLYARGAADMKGSLACMVVAVERFVGEHPNHKGSISFLITSDEEGPFINGTTRVVDTLQERNEIIDMCIVGEPSSTSHVGDVVKNGRRGSLTGNLTVKGIQGHVAYPHIARNPIHQAMPALSELATTVWDNGNDYFPPTSFQIPNMNGGTGASNVIPGTVDIMFNFRFSTESTVDELQQRVVEILDKHDLEYDLDWIINGLPFLTDTGDLLTAVVNAVDTVNQQKPQLLTTGGTSDGRFIAQMGSQVIELGPVNATIHKVNECVNVEDLEKLTDMYQEVLNNLLA.

His68 lines the Zn(2+) pocket. Residue Asp70 is part of the active site. Residue Asp101 coordinates Zn(2+). The Proton acceptor role is filled by Glu135. Zn(2+) is bound by residues Glu136, Glu164, and His350.

The protein belongs to the peptidase M20A family. DapE subfamily. In terms of assembly, homodimer. Zn(2+) is required as a cofactor. The cofactor is Co(2+).

The catalysed reaction is N-succinyl-(2S,6S)-2,6-diaminopimelate + H2O = (2S,6S)-2,6-diaminopimelate + succinate. The protein operates within amino-acid biosynthesis; L-lysine biosynthesis via DAP pathway; LL-2,6-diaminopimelate from (S)-tetrahydrodipicolinate (succinylase route): step 3/3. Its function is as follows. Catalyzes the hydrolysis of N-succinyl-L,L-diaminopimelic acid (SDAP), forming succinate and LL-2,6-diaminopimelate (DAP), an intermediate involved in the bacterial biosynthesis of lysine and meso-diaminopimelic acid, an essential component of bacterial cell walls. This is Succinyl-diaminopimelate desuccinylase from Aliivibrio fischeri (strain MJ11) (Vibrio fischeri).